Consider the following 479-residue polypeptide: Citrate synthase, mitochondrial (479 aa).

The transit peptide at 1-37 (MSAILSTTSKSFLSRGSTRQCQNMQKALFALLNARHY) directs the protein to the mitochondrion. Residues His312, His358, and Asp413 contribute to the active site. Ser462 is modified (phosphoserine).

Belongs to the citrate synthase family. As to quaternary structure, monomer and homodimer. Exists as an inactive monomer when phosphorylated. Homodimerization is dependent on dephosphorylation of Ser-462 by PTC7 and is required for activity. Post-translationally, phosphorylation at Ser-462. Dephosphorylated at Ser-462 by PTC7.

The protein resides in the mitochondrion matrix. It catalyses the reaction oxaloacetate + acetyl-CoA + H2O = citrate + CoA + H(+). Its pathway is carbohydrate metabolism; tricarboxylic acid cycle; isocitrate from oxaloacetate: step 1/2. Phosphorylation at Ser-462 inhibits catalytic activity. Dephosphorylation at Ser-462 by PTC7 enhances catalytic activity. In terms of biological role, specific citrate synthase with catalytic activity only with acetyl-CoA. The polypeptide is Citrate synthase, mitochondrial (Saccharomyces cerevisiae (strain ATCC 204508 / S288c) (Baker's yeast)).